The primary structure comprises 166 residues: MKLSNKVTQLTDIIAPAVAACDVALWGVEFLPQGGRSLLRIYIEALPEDKAADKQVTIENCAAVTHQVSGVLEVHDPIAGEYVLEVSSPGLDRPFFAPEQMTDYMGQTINLRLIQAVGSGSSKRRKVTGKLEQLDDKQLSVVTADGERYDIALDNIDKANLIYQDL.

The protein belongs to the RimP family.

It localises to the cytoplasm. Functionally, required for maturation of 30S ribosomal subunits. The polypeptide is Ribosome maturation factor RimP (Psychrobacter sp. (strain PRwf-1)).